The primary structure comprises 119 residues: Large ribosomal subunit protein uL18 (119 aa).

Belongs to the universal ribosomal protein uL18 family. In terms of assembly, part of the 50S ribosomal subunit; part of the 5S rRNA/L5/L18/L25 subcomplex. Contacts the 5S and 23S rRNAs.

Its function is as follows. This is one of the proteins that bind and probably mediate the attachment of the 5S RNA into the large ribosomal subunit, where it forms part of the central protuberance. The sequence is that of Large ribosomal subunit protein uL18 from Chlorobaculum tepidum (strain ATCC 49652 / DSM 12025 / NBRC 103806 / TLS) (Chlorobium tepidum).